The chain runs to 336 residues: Nucleoid-associated protein Spro_3255 (336 aa).

The protein belongs to the YejK family.

It is found in the cytoplasm. It localises to the nucleoid. In Serratia proteamaculans (strain 568), this protein is Nucleoid-associated protein Spro_3255.